We begin with the raw amino-acid sequence, 430 residues long: Asparagine--tRNA ligase (430 aa).

It belongs to the class-II aminoacyl-tRNA synthetase family. In terms of assembly, homodimer.

It localises to the cytoplasm. It carries out the reaction tRNA(Asn) + L-asparagine + ATP = L-asparaginyl-tRNA(Asn) + AMP + diphosphate + H(+). The polypeptide is Asparagine--tRNA ligase (Shouchella clausii (strain KSM-K16) (Alkalihalobacillus clausii)).